A 277-amino-acid chain; its full sequence is Phosphatidylglycerol--prolipoprotein diacylglyceryl transferase (277 aa).

The next 4 membrane-spanning stretches (helical) occupy residues 16 to 36, 58 to 78, 93 to 113, and 119 to 139; these read LGPI…LFGW, FLTW…VLFY, IWSG…AILL, and GFSP…GLFL. A 1,2-diacyl-sn-glycero-3-phospho-(1'-sn-glycerol) is bound at residue Arg-141. 3 helical membrane-spanning segments follow: residues 182–202, 207–227, and 239–259; these read AALE…KPAV, GTLS…GEVF, and FGVT…LWIL.

This sequence belongs to the Lgt family.

The protein localises to the cell inner membrane. The catalysed reaction is L-cysteinyl-[prolipoprotein] + a 1,2-diacyl-sn-glycero-3-phospho-(1'-sn-glycerol) = an S-1,2-diacyl-sn-glyceryl-L-cysteinyl-[prolipoprotein] + sn-glycerol 1-phosphate + H(+). Its pathway is protein modification; lipoprotein biosynthesis (diacylglyceryl transfer). Its function is as follows. Catalyzes the transfer of the diacylglyceryl group from phosphatidylglycerol to the sulfhydryl group of the N-terminal cysteine of a prolipoprotein, the first step in the formation of mature lipoproteins. The polypeptide is Phosphatidylglycerol--prolipoprotein diacylglyceryl transferase (Rhodospirillum centenum (strain ATCC 51521 / SW)).